Here is a 348-residue protein sequence, read N- to C-terminus: NADH-quinone oxidoreductase subunit H (348 aa).

8 consecutive transmembrane segments (helical) span residues 25–45, 95–115, 128–148, 168–188, 204–224, 254–274, 287–307, and 327–347; these read ILFL…VAAL, FMFI…FAII, IGIL…MFGG, ISYE…TGSF, WNIF…VAVT, FFIG…CLFF, ILPP…MFVL, and VCLP…LISA.

It belongs to the complex I subunit 1 family. In terms of assembly, NDH-1 is composed of 14 different subunits. Subunits NuoA, H, J, K, L, M, N constitute the membrane sector of the complex.

The protein localises to the cell inner membrane. The enzyme catalyses a quinone + NADH + 5 H(+)(in) = a quinol + NAD(+) + 4 H(+)(out). In terms of biological role, NDH-1 shuttles electrons from NADH, via FMN and iron-sulfur (Fe-S) centers, to quinones in the respiratory chain. The immediate electron acceptor for the enzyme in this species is believed to be ubiquinone. Couples the redox reaction to proton translocation (for every two electrons transferred, four hydrogen ions are translocated across the cytoplasmic membrane), and thus conserves the redox energy in a proton gradient. This subunit may bind ubiquinone. This is NADH-quinone oxidoreductase subunit H from Psychrobacter sp. (strain PRwf-1).